The following is a 688-amino-acid chain: MDKVLNREESMELMDLLGLDRSAWGNIPVMRKAYLKKCKELHPDKGGDEDKMKRMNFLYKKMEQGVKVAHQPDFGTWNSSEVPTYGTDEWESWWNTFNEKWDEDLFCHEEMFASDDENTGSQHSTPPKKKKKVEDPKDFPVDLHAFLSQAVFSNRTVASFAVYTTKEKAQILYKKLMEKYSVTFISRHGFGGHNILFFLTPHRHRVSAINNYCQKLCTFSFLICKGVNKEYLFYSALCRQPYAVVEESIQGGLKEHDFNPEEPEETKQVSWKLVTQYALETKCEDVFLLMGMYLDFQENPQQCKKCEKKDQPNHFNHHEKHYYNAQIFADSKNQKSICQQAVDTVAAKQRVDSIHMTREEMLVERFNFLLDKMDLIFGAHGNAVLEQYMAGVAWIHCLLPQMDTVIYDFLKCIVLNIPKKRYWLFKGPIDSGKTTLAAALLDLCGGKSLNVNMPLERLNFELGVGIDQFMVVFEDVKGTGAESRDLPSGHGISNLDCLRDYLDGSVKVNLERKHQNKRTQVFPPGIVTMNEYSVPRTLQARFVRQIDFRPKAYLRKSLSCSEYLLEKRILQSGMTLLLLLIWFRPVADFAAAIHERIVQWKERLDLEISMYTFSTMKANVGMGRPILDFPREEDSEAEDSGHGSSTESQSQCFSQVSEASGADTQENCTFHICKGFQCFKKPKTPPPK.

Met-1 carries the post-translational modification N-acetylmethionine; by host. Residues 12 to 75 (ELMDLLGLDR…VKVAHQPDFG (64 aa)) enclose the J domain. Residues 105–109 (LFCHE) carry the LXCXE motif motif. Phosphoserine; by host is present on residues Ser-114, Ser-121, and Ser-124. Positions 115–135 (DDENTGSQHSTPPKKKKKVED) are disordered. Thr-125 is modified (phosphothreonine; by host). The short motif at 126-133 (PPKKKKKV) is the Nuclear localization signal element. The T-ag OBD DNA-binding region spans 140 to 255 (PVDLHAFLSQ…EESIQGGLKE (116 aa)). The T-ag D1-type zinc finger occupies 266-358 (TKQVSWKLVT…QRVDSIHMTR (93 aa)). Residues Cys-303, Cys-306, His-314, and His-318 each coordinate Zn(2+). Positions 401–561 (QMDTVIYDFL…AYLRKSLSCS (161 aa)) constitute an SF3 helicase domain. ATP is bound at residue 427–434 (GPIDSGKT). The segment at 632–658 (EEDSEAEDSGHGSSTESQSQCFSQVSE) is disordered. The span at 642-658 (HGSSTESQSQCFSQVSE) shows a compositional bias: polar residues. At Ser-660 the chain carries Phosphoserine; by host. Lys-680 is subject to N6-acetyllysine; by host. Thr-684 carries the phosphothreonine; by host modification.

Forms homohexamers in the presence of ATP. Interacts with host HDAC1. Interacts (via LXCXE domain) with host RB1; the interaction induces the aberrant dissociation of RB1-E2F1 complex thereby disrupting RB1's activity. Interacts (via LXCXE domain) with host pRB-related proteins RBL1 and RBL2. Interacts (via C-terminus) with host TOP1 and POLA1 allowing DNA replication. Interacts with host TP53, inhibiting TP53 binding to DNA. Interacts with host preinitiation complex components TBP, TFIIA and TFIID to regulate transcription initiation. It depends on Mg(2+) as a cofactor. Post-translationally, phosphorylated on both serine and threonine residues. Small t antigen inhibits the dephosphorylation by the AC form of PP2A. O-Glycosylated near the C-terminal region. In terms of processing, acetylated by CBP in a TP53-dependent manner.

Its subcellular location is the host nucleus. The catalysed reaction is Couples ATP hydrolysis with the unwinding of duplex DNA by translocating in the 3'-5' direction.. It catalyses the reaction ATP + H2O = ADP + phosphate + H(+). Functionally, isoform large T antigen is a key early protein essential for both driving viral replication and inducing cellular transformation. Plays a role in viral genome replication by driving entry of quiescent cells into the cell cycle and by autoregulating the synthesis of viral early mRNA. Displays highly oncogenic activities by corrupting the host cellular checkpoint mechanisms that guard cell division and the transcription, replication, and repair of DNA. Participates in the modulation of cellular gene expression preceeding viral DNA replication. This step involves binding to host key cell cycle regulators retinoblastoma protein RB1/pRb and TP53. Induces the disassembly of host E2F1 transcription factors from RB1, thus promoting transcriptional activation of E2F1-regulated S-phase genes. Inhibits host TP53 binding to DNA, abrogating the ability of TP53 to stimulate gene expression. Plays the role of a TFIID-associated factor (TAF) in transcription initiation for all three RNA polymerases, by stabilizing the TBP-TFIIA complex on promoters. Initiates viral DNA replication and unwinding via interactions with the viral origin of replication. Binds two adjacent sites in the SV40 origin. The replication fork movement is facilitated by Large T antigen helicase activity. Has processive 3'-5' DNA helicase activity which requires a short 3' single-stranded region and ATP. Activates the transcription of viral late mRNA, through host TBP and TFIIA stabilization. Interferes with histone deacetylation mediated by HDAC1, leading to activation of transcription. The chain is Large T antigen from JC polyomavirus (JCPyV).